Reading from the N-terminus, the 300-residue chain is Ribosomal protein bS6--L-glutamate ligase (300 aa).

The region spanning 104–287 (MQLLARQGID…IAGKMIRWIE (184 aa)) is the ATP-grasp domain. Residues Lys-141, 178–179 (EY), Asp-187, and 211–213 (RSN) contribute to the ATP site. 3 residues coordinate Mg(2+): Asp-248, Glu-260, and Asn-262. Mn(2+)-binding residues include Asp-248, Glu-260, and Asn-262.

The protein belongs to the RimK family. It depends on Mg(2+) as a cofactor. Mn(2+) serves as cofactor.

An L-glutamate ligase that catalyzes the ATP-dependent post-translational addition of glutamate residues to the C-terminus of ribosomal protein bS6 (RpsF). Is also able to catalyze the synthesis of poly-alpha-glutamate in vitro, via ATP hydrolysis from unprotected glutamate as substrate. The number of glutamate residues added to either RpsF or to poly-alpha-glutamate changes with pH. The protein is Ribosomal protein bS6--L-glutamate ligase of Escherichia coli O139:H28 (strain E24377A / ETEC).